A 322-amino-acid polypeptide reads, in one-letter code: ATP-dependent 6-phosphofructokinase (322 aa).

Glycine 11 lines the ATP pocket. An ADP-binding site is contributed by 21-25 (RAVAR). ATP is bound by residues 72–73 (RY) and 102–105 (GDGS). Aspartate 103 is a binding site for Mg(2+). Substrate is bound at residue 125 to 127 (TID). Aspartate 127 acts as the Proton acceptor in catalysis. Arginine 154 contacts ADP. Substrate-binding positions include arginine 162 and 169-171 (MGR). ADP-binding positions include 185–187 (GAD) and 213–215 (KDY). Substrate-binding positions include glutamate 222, arginine 246, and 252–255 (HVQR).

Belongs to the phosphofructokinase type A (PFKA) family. ATP-dependent PFK group I subfamily. Prokaryotic clade 'B1' sub-subfamily. As to quaternary structure, homotetramer. Requires Mg(2+) as cofactor.

Its subcellular location is the cytoplasm. The catalysed reaction is beta-D-fructose 6-phosphate + ATP = beta-D-fructose 1,6-bisphosphate + ADP + H(+). Its pathway is carbohydrate degradation; glycolysis; D-glyceraldehyde 3-phosphate and glycerone phosphate from D-glucose: step 3/4. Its activity is regulated as follows. Allosterically activated by ADP and other diphosphonucleosides, and allosterically inhibited by phosphoenolpyruvate. Catalyzes the phosphorylation of D-fructose 6-phosphate to fructose 1,6-bisphosphate by ATP, the first committing step of glycolysis. The sequence is that of ATP-dependent 6-phosphofructokinase from Pediococcus pentosaceus (strain ATCC 25745 / CCUG 21536 / LMG 10740 / 183-1w).